The sequence spans 525 residues: MAPSSAQGLELLHGYLNLFTPRTGDVSFMRLVSGYVLATFVAGIGALLLWTLTTVFYRLYLHPLRRYPGPKLWAISRLPYIRSTVKGTIVHDFHRLHKQYGSVVRIAPDELSYSTPEATKVIYQSSPELHKDPMHLPPFHNGTPGILAAEEQHHRRYRRLLAYGFSDRGMRAQQPLIQRHIDLLVKRLSENSGKGSLDIVEWYNWCTFDIIGDLAFGESFGCLEESKTHEWIASIAGNVKAIPIINAIRRFKLDWVIPLIAPKKLLKMRQRNAQFTENKVDQRLSHGADRGDLWDGVMDPKGTKGGMSRQEMISNGSAIVLAGSETSSTLLSGCTWLLLQNPDVLAKLKEHVRGSFTDQSEIDLISVGKLDYMAAVLDEALRLYPPVPMQSNRIVNPGGADIAGQYVPAGTTVAVQQYAACRSSDNFRRPDEFLPQRWLEDPEFANDRRATSQPFSVGPRNCIGRQLAHAEMRLILAKILWHFDLELDAPKMGPRDWLSEQGVWILWDKSPLWVRLMPRTLEKSG.

Residues 36–56 (VLATFVAGIGALLLWTLTTVF) traverse the membrane as a helical segment. Asparagine 315 is a glycosylation site (N-linked (GlcNAc...) asparagine). Cysteine 462 serves as a coordination point for heme.

The protein belongs to the cytochrome P450 family. Requires heme as cofactor.

Its subcellular location is the membrane. The catalysed reaction is (1'S)-averantin + reduced [NADPH--hemoprotein reductase] + O2 = (1'S,5'R)-5'-hydroxyaverantin + oxidized [NADPH--hemoprotein reductase] + H2O. It carries out the reaction (1'S)-averantin + reduced [NADPH--hemoprotein reductase] + O2 = (1'S,5'S)-5'-hydroxyaverantin + oxidized [NADPH--hemoprotein reductase] + H2O + H(+). Its pathway is mycotoxin biosynthesis. Functionally, averantin hydroxylase; part of the fragmented gene cluster that mediates the biosynthesis of dothistromin (DOTH), a polyketide toxin very similar in structure to the aflatoxin precursor, versicolorin B. The first step of the pathway is the conversion of acetate to norsolorinic acid (NOR) and requires the fatty acid synthase subunits hexA and hexB, as well as the polyketide synthase pksA. PksA combines a hexanoyl starter unit and 7 malonyl-CoA extender units to synthesize the precursor NOR. The hexanoyl starter unit is provided to the acyl-carrier protein (ACP) domain by the fungal fatty acid synthase hexA/hexB. The second step is the conversion of NOR to averantin (AVN) and requires the norsolorinic acid ketoreductase nor1, which catalyzes the dehydration of norsolorinic acid to form (1'S)-averantin. The cytochrome P450 monooxygenase avnA then catalyzes the hydroxylation of AVN to 5'hydroxyaverantin (HAVN). The next step is performed by adhA that transforms HAVN to averufin (AVF). Averufin might then be converted to hydroxyversicolorone by cypX and avfA. Hydroxyversicolorone is further converted versiconal hemiacetal acetate (VHA) by moxY. VHA is then the substrate for the versiconal hemiacetal acetate esterase est1 to yield versiconal (VAL). Versicolorin B synthase vbsA then converts VAL to versicolorin B (VERB) by closing the bisfuran ring. Then, the activity of the versicolorin B desaturase verB leads to versicolorin A (VERA). DotB, a predicted chloroperoxidase, may perform epoxidation of the A-ring of VERA. Alternatively, a cytochrome P450, such as cypX or avnA could catalyze this step. It is also possible that another, uncharacterized, cytochrome P450 enzyme is responsible for this step. Opening of the epoxide could potentially be achieved by the epoxide hydrolase epoA. However, epoA seems not to be required for DOTH biosynthesis, but other epoxide hydrolases may have the ability to complement this hydrolysis. Alternatively, opening of the epoxide ring could be achieved non-enzymatically. The next step is the deoxygenation of ring A to yield the 5,8-dihydroxyanthraquinone which is most likely catalyzed by the NADPH dehydrogenase encoded by ver1. The last stages of DOTH biosynthesis are proposed to involve hydroxylation of the bisfuran. OrdB and norB might have oxidative roles here. An alternative possibility is that cytochrome P450 monoogenases such as avnA and cypX might perform these steps in addition to previously proposed steps. This Dothistroma septosporum (strain NZE10 / CBS 128990) (Red band needle blight fungus) protein is Averantin hydroxylase.